The sequence spans 187 residues: Translation machinery-associated protein 22 (187 aa).

The region spanning 94–165 is the SUI1 domain; it reads VTIKRIERNK…EIEEFILEKY (72 aa).

It belongs to the DENR family. As to quaternary structure, interacts with the 40S ribosomal subunit.

The protein resides in the cytoplasm. This Neurospora crassa (strain ATCC 24698 / 74-OR23-1A / CBS 708.71 / DSM 1257 / FGSC 987) protein is Translation machinery-associated protein 22 (tma-22).